Here is a 566-residue protein sequence, read N- to C-terminus: Urease subunit beta (566 aa).

One can recognise a Urease domain in the interval 129-566 (GGIDTHIHFI…VPMARRYFMF (438 aa)). His-134, His-136, and Lys-217 together coordinate Ni(2+). Lys-217 is modified (N6-carboxylysine). His-219 contacts substrate. 2 residues coordinate Ni(2+): His-246 and His-272. The active-site Proton donor is His-320. Asp-360 is a binding site for Ni(2+).

This sequence belongs to the metallo-dependent hydrolases superfamily. Urease alpha subunit family. In terms of assembly, heterohexamer of 3 UreA (alpha) and 3 UreB (beta) subunits. It depends on Ni cation as a cofactor. Post-translationally, carboxylation allows a single lysine to coordinate two nickel ions.

The protein resides in the cytoplasm. The enzyme catalyses urea + 2 H2O + H(+) = hydrogencarbonate + 2 NH4(+). The protein operates within nitrogen metabolism; urea degradation; CO(2) and NH(3) from urea (urease route): step 1/1. In Aliarcobacter butzleri (strain RM4018) (Arcobacter butzleri), this protein is Urease subunit beta.